A 448-amino-acid chain; its full sequence is Probable glycine dehydrogenase (decarboxylating) subunit 1 (448 aa).

The protein belongs to the GcvP family. N-terminal subunit subfamily. In terms of assembly, the glycine cleavage system is composed of four proteins: P, T, L and H. In this organism, the P 'protein' is a heterodimer of two subunits.

The catalysed reaction is N(6)-[(R)-lipoyl]-L-lysyl-[glycine-cleavage complex H protein] + glycine + H(+) = N(6)-[(R)-S(8)-aminomethyldihydrolipoyl]-L-lysyl-[glycine-cleavage complex H protein] + CO2. Its function is as follows. The glycine cleavage system catalyzes the degradation of glycine. The P protein binds the alpha-amino group of glycine through its pyridoxal phosphate cofactor; CO(2) is released and the remaining methylamine moiety is then transferred to the lipoamide cofactor of the H protein. The chain is Probable glycine dehydrogenase (decarboxylating) subunit 1 from Pyrococcus furiosus (strain ATCC 43587 / DSM 3638 / JCM 8422 / Vc1).